We begin with the raw amino-acid sequence, 108 residues long: DNA-directed RNA polymerase III subunit RPC10 (108 aa).

Residues Cys5, Cys8, Cys25, Cys28, Cys69, and Cys72 each contribute to the Zn(2+) site. Residues 5-28 form a C4-type zinc finger; sequence CPGCGNGLIVEEGQRCHRFACNTC. Residues 65–107 form a TFIIS-type zinc finger; that stretch reads TAEPCPKCEHPRAYFMQLQTRYADEPMTTFYKCCNAQCGHRWR. A Hairpin motif is present at residues 88–89; it reads DE. Cys98 and Cys102 together coordinate Zn(2+).

It belongs to the archaeal RpoM/eukaryotic RPA12/RPB9/RPC11 RNA polymerase family. In terms of assembly, component of the RNA polymerase III complex consisting of 17 subunits: a ten-subunit horseshoe-shaped catalytic core composed of POLR3A/RPC1, POLR3B/RPC2, POLR1C/RPAC1, POLR1D/RPAC2, POLR3K/RPC10, POLR2E/RPABC1, POLR2F/RPABC2, POLR2H/RPABC3, POLR2K/RPABC4 and POLR2L/RPABC5; a mobile stalk composed of two subunits POLR3H/RPC8 and CRCP/RPC9, protruding from the core and functioning primarily in transcription initiation; and additional subunits homologous to general transcription factors of the RNA polymerase II machinery, POLR3C/RPC3-POLR3F/RPC6-POLR3G/RPC7 heterotrimer required for transcription initiation and POLR3D/RPC4-POLR3E/RPC5 heterodimer involved in both transcription initiation and termination.

The protein resides in the nucleus. Its function is as follows. Core component of RNA polymerase III (Pol III) which synthesizes small non-coding RNAs using the four ribonucleoside triphosphates as substrates. Can mediate Pol I proofreading of the nascent RNA transcript. Anchors into the Pol III active site to constantly monitor transcription fidelity, cleaves mis-incorporated 5'-ribonucleotides and restarts the transcription process. Once Pol III reaches the poly(dT) termination signal, can induce Pol III clamp opening and transcription termination. Pol III plays an important role in sensing and limiting infection by intracellular bacteria and DNA viruses. Acts as a nuclear and cytosolic DNA sensor involved in innate immune response. Can sense non-self dsDNA that serves as template for transcription into dsRNA. The non-self RNA polymerase III transcripts, such as Epstein-Barr virus-encoded RNAs (EBERs) induce type I interferon and NF-kappa-B through the RIG-I pathway. This Bos taurus (Bovine) protein is DNA-directed RNA polymerase III subunit RPC10 (POLR3K).